The chain runs to 590 residues: MSDSPAGSNPRTPESSGSGSGGGGKRPAVPAAVSLLPPADPLRQANRLPIRVLKMLSAHTGHLLHPEYLQPLSSTPVSPIELDAKKSPLALLAQTCSQIGKPDPPPSSKLNSVAAAANGLGAEKDPGRSAPGAASAAAALKQLGDSPAEDKSSFKPYSKGSGGGDSRKDSGSSSVSSTSSSSSSSPGDKAGFRVPSAACPPFPPHGAPVSASSSSSSPGGSRGGSPHHSDCKNGGGVGGGELDKKDQEPKPSPEPAAVSRGGGGEPGAHGGAESGASGRKSEPPSALVGAGHVAPVSPYKPGHSVFPLPPSSIGYHGSIVGAYAGYPSQFVPGLDPSKSGLVGGQLSGGLGLPPGKPPSSSPLTGASPPSFLQGLCRDPYCLGGYHGASHLGGSSCSTCSAHDPAGPSLKAGGYPLVYPGHPLQPAALSSSAAQAALPGHPLYTYGFMLQNEPLPHSCNWVAASGPCDKRFATSEELLSHLRTHTALPGAEKLLAAYPGASGLGSAAAAAAAAASCHLHLPPPAAPGSPGSLSLRNPHTLGLSRYHPYGKSHLSTAGGLAVPSLPTAGPYYSPYALYGQRLASASALGYQ.

Residues 1 to 14 show a composition bias toward polar residues; it reads MSDSPAGSNPRTPE. Disordered regions lie at residues 1-43, 96-293, and 341-366; these read MSDS…DPLR, CSQI…AGHV, and LVGGQLSGGLGLPPGKPPSSSPLTGA. At S2 the chain carries N-acetylserine. Composition is skewed to low complexity over residues 27 to 37, 128 to 139, 171 to 189, and 207 to 219; these read PAVPAAVSLLP, RSAPGAASAAAA, GSSSVSSTSSSSSSSPGDK, and APVSASSSSSSPG. The span at 241–251 shows a compositional bias: basic and acidic residues; the sequence is ELDKKDQEPKP. Phosphoserine is present on S252. Composition is skewed to gly residues over residues 260–273 and 341–352; these read RGGGGEPGAHGGAE and LVGGQLSGGLGL. Residues 456 to 484 form a C2H2-type zinc finger; sequence HSCNWVAASGPCDKRFATSEELLSHLRTH. R580 carries the post-translational modification Omega-N-methylarginine.

This sequence belongs to the Elbow/Noc family. Interacts with TLE4; increases transcriptional repression. Interacts with DCAF7 and PHB2. May interact with HSPD1. In terms of tissue distribution, expressed in mammary epithelium.

It localises to the nucleus. It is found in the cytoplasm. In terms of biological role, transcriptional corepressor which does not bind directly to DNA and may regulate transcription through recruitment of histone deacetylases to gene promoters. Regulates cell adhesion, migration and proliferation. May be required for segmental gene expression during hindbrain development. The sequence is that of Zinc finger protein 703 (ZNF703) from Homo sapiens (Human).